A 388-amino-acid polypeptide reads, in one-letter code: Formate-dependent phosphoribosylglycinamide formyltransferase (388 aa).

N(1)-(5-phospho-beta-D-ribosyl)glycinamide-binding positions include 20–21 (EL) and glutamate 80. Residues arginine 112, lysine 153, 158–163 (SSGKGQ), 193–196 (EEFV), and glutamate 201 each bind ATP. The ATP-grasp domain occupies 117–306 (RLASEKLGLR…EFEIHVRSIL (190 aa)). Mg(2+)-binding residues include glutamate 265 and glutamate 277. N(1)-(5-phospho-beta-D-ribosyl)glycinamide contacts are provided by residues aspartate 284, lysine 352, and 359-360 (RR).

The protein belongs to the PurK/PurT family. As to quaternary structure, homodimer.

The enzyme catalyses N(1)-(5-phospho-beta-D-ribosyl)glycinamide + formate + ATP = N(2)-formyl-N(1)-(5-phospho-beta-D-ribosyl)glycinamide + ADP + phosphate + H(+). It functions in the pathway purine metabolism; IMP biosynthesis via de novo pathway; N(2)-formyl-N(1)-(5-phospho-D-ribosyl)glycinamide from N(1)-(5-phospho-D-ribosyl)glycinamide (formate route): step 1/1. Involved in the de novo purine biosynthesis. Catalyzes the transfer of formate to 5-phospho-ribosyl-glycinamide (GAR), producing 5-phospho-ribosyl-N-formylglycinamide (FGAR). Formate is provided by PurU via hydrolysis of 10-formyl-tetrahydrofolate. The chain is Formate-dependent phosphoribosylglycinamide formyltransferase from Methanococcus vannielii (strain ATCC 35089 / DSM 1224 / JCM 13029 / OCM 148 / SB).